A 313-amino-acid polypeptide reads, in one-letter code: Beta-ketoacyl-[acyl-carrier-protein] synthase III (313 aa).

Residues C112 and H238 contribute to the active site. Residues 239–243 (QANIR) are ACP-binding. The active site involves N268.

Belongs to the thiolase-like superfamily. FabH family. As to quaternary structure, homodimer.

Its subcellular location is the cytoplasm. It carries out the reaction malonyl-[ACP] + acetyl-CoA + H(+) = 3-oxobutanoyl-[ACP] + CO2 + CoA. It participates in lipid metabolism; fatty acid biosynthesis. Its function is as follows. Catalyzes the condensation reaction of fatty acid synthesis by the addition to an acyl acceptor of two carbons from malonyl-ACP. Catalyzes the first condensation reaction which initiates fatty acid synthesis and may therefore play a role in governing the total rate of fatty acid production. Possesses both acetoacetyl-ACP synthase and acetyl transacylase activities. Its substrate specificity determines the biosynthesis of branched-chain and/or straight-chain of fatty acids. This chain is Beta-ketoacyl-[acyl-carrier-protein] synthase III, found in Staphylococcus haemolyticus (strain JCSC1435).